Reading from the N-terminus, the 232-residue chain is Ion-translocating oxidoreductase complex subunit E (232 aa).

6 helical membrane passes run 18-38, 39-59, 69-89, 93-113, 127-147, and 182-202; these read GLVQ…ITNA, LGLG…VSLV, IPVF…LINA, GLYL…IIIG, AAFD…VLGA, and PFLL…LIAL.

This sequence belongs to the NqrDE/RnfAE family. In terms of assembly, the complex is composed of six subunits: RnfA, RnfB, RnfC, RnfD, RnfE and RnfG.

It is found in the cell inner membrane. Part of a membrane-bound complex that couples electron transfer with translocation of ions across the membrane. The chain is Ion-translocating oxidoreductase complex subunit E from Shewanella baltica (strain OS185).